Here is a 294-residue protein sequence, read N- to C-terminus: 4-diphosphocytidyl-2-C-methyl-D-erythritol kinase (294 aa).

K11 is an active-site residue. 93–103 (PFGAGLGGGSS) contributes to the ATP binding site. The active site involves D135.

The protein belongs to the GHMP kinase family. IspE subfamily.

It carries out the reaction 4-CDP-2-C-methyl-D-erythritol + ATP = 4-CDP-2-C-methyl-D-erythritol 2-phosphate + ADP + H(+). Its pathway is isoprenoid biosynthesis; isopentenyl diphosphate biosynthesis via DXP pathway; isopentenyl diphosphate from 1-deoxy-D-xylulose 5-phosphate: step 3/6. Its function is as follows. Catalyzes the phosphorylation of the position 2 hydroxy group of 4-diphosphocytidyl-2C-methyl-D-erythritol. In Chlorobium phaeobacteroides (strain DSM 266 / SMG 266 / 2430), this protein is 4-diphosphocytidyl-2-C-methyl-D-erythritol kinase.